A 366-amino-acid chain; its full sequence is 5-hydroxytryptamine receptor 1F (366 aa).

Over 1 to 24 (MDFLNSSDQNLTSEELLNRMPSKI) the chain is Extracellular. 2 N-linked (GlcNAc...) asparagine glycosylation sites follow: Asn-5 and Asn-10. Residues 25–49 (LVSLTLSGLALMTTTINSLVIAAII) traverse the membrane as a helical segment. Residues 50–59 (VTRKLHHPAN) are Cytoplasmic-facing. Residues 60-81 (YLICSLAVTDFLVAVLVMPFSI) form a helical membrane-spanning segment. Over 82 to 96 (VYIVRESWIMGQVVC) the chain is Extracellular. The cysteines at positions 96 and 172 are disulfide-linked. A helical membrane pass occupies residues 97-119 (DIWLSVDITCCTCSILHLSAIAL). Asp-103 and Cys-107 together coordinate serotonin. A DRY motif; important for ligand-induced conformation changes motif is present at residues 120-122 (DRY). The Cytoplasmic segment spans residues 120 to 139 (DRYRAITDAVEYARKRTPKH). Residues 140-159 (AGIMITIVWIISVFISMPPL) form a helical membrane-spanning segment. The Extracellular portion of the chain corresponds to 160–178 (FWRHQGTSRDDECIIKHDH). The chain crosses the membrane as a helical span at residues 179-202 (IVSTIYSTFGAFYIPLALILILYY). At 203–291 (KIYRAAKTLY…KISGTRERKA (89 aa)) the chain is on the cytoplasmic side. Residues 292-315 (ATTLGLILGAFVICWLPFFVKELV) form a helical membrane-spanning segment. Topologically, residues 316 to 327 (VNVCDKCKISEE) are extracellular. The chain crosses the membrane as a helical span at residues 328-350 (MSNFLAWLGYLNSLINPLIYTIF). Positions 343-347 (NPLIY) match the NPxxY motif; important for ligand-induced conformation changes and signaling motif. The Cytoplasmic segment spans residues 351–366 (NEDFKKAFQKLVRCRC).

It belongs to the G-protein coupled receptor 1 family.

The protein resides in the cell membrane. Functionally, G-protein coupled receptor for 5-hydroxytryptamine (serotonin). Also functions as a receptor for various alkaloids and psychoactive substances. Receptor for lasmiditan, a drug for the treatment of acute migraine. Ligand binding causes a conformation change that triggers signaling via guanine nucleotide-binding proteins (G proteins) and modulates the activity of downstream effectors, such as adenylate cyclase. HTR1F is coupled to G(i)/G(o) G alpha proteins and mediates inhibitory neurotransmission by inhibiting adenylate cyclase activity. In Homo sapiens (Human), this protein is 5-hydroxytryptamine receptor 1F.